Reading from the N-terminus, the 203-residue chain is Outer-membrane lipoprotein LolB (203 aa).

The N-terminal stretch at 1–21 (MRLSASLFHIALVTVLLVLAG) is a signal peptide. The N-palmitoyl cysteine moiety is linked to residue Cys22. Cys22 is lipidated: S-diacylglycerol cysteine.

Belongs to the LolB family. As to quaternary structure, monomer.

The protein localises to the cell outer membrane. In terms of biological role, plays a critical role in the incorporation of lipoproteins in the outer membrane after they are released by the LolA protein. The chain is Outer-membrane lipoprotein LolB from Shewanella frigidimarina (strain NCIMB 400).